A 518-amino-acid chain; its full sequence is MQFMMPLDTNACAQPMRRAGEGAGTERLMERLNIGGMTQEKALRKRCFGDGVTGTARCVFTSDADRDTPHLRTQSSRKNYADASHVSAVILGGGTGVQLFPLTSTRATPAVPVGGCYRLIDIPMSNCFNSGINKIFVMTQFNSASLNRHIHHTYLGGGINFTDGSVQVLAATQMPDEPAGWFQGTADAIRKFMWILEDHYNQNNIEHVVILCGDQLYRMNYMELVQKHVDDNADITISCAPIDGSRASDYGLVKFDDSGRVIQFLEKPEGADLESMKVDTSFLSYAIDDKQKYPYIASMGIYVLKKDVLLDILKSKYAHLQDFGSEILPRAVLEHNVKACVFTEYWEDIGTIKSFFDANLALTEQPPKFEFYDPKTPFFTSPRYLPPARLEKCKIKDAIISDGCSFSECTIEHSVIGISSRVSIGCELKDTMMMGADQYETEEETSKLLFEGKVPIGIGENTKIRNCIIDMNARIGRNVIIANTQGVQESDHPEEGYYIRSGIVVILKNATIKDGTVI.

It belongs to the bacterial/plant glucose-1-phosphate adenylyltransferase family. In terms of assembly, heterotetramer composed of two small and two large subunits.

Its subcellular location is the cytoplasm. It localises to the cytosol. It catalyses the reaction alpha-D-glucose 1-phosphate + ATP + H(+) = ADP-alpha-D-glucose + diphosphate. It functions in the pathway glycan biosynthesis; starch biosynthesis. Its activity is regulated as follows. Activated by 3'phosphoglycerate, inhibited by orthophosphate. Allosteric regulation. Inhibited by inorganic phosphate (Pi). Involved in synthesis of starch. Catalyzes the synthesis of ADP-glucose, a molecule that serves as an activated glycosyl donor for alpha-1,4-glucan synthesis. Essential for starch synthesis in seed endosperm. Is essential for both catalytic and allosteric regulatory properties of the cytosolic heterotetramer enzyme. The protein is Glucose-1-phosphate adenylyltransferase large subunit 2, cytosolic of Oryza sativa subsp. japonica (Rice).